We begin with the raw amino-acid sequence, 280 residues long: Protein phosphatase 1 regulatory subunit 3B-A (280 aa).

Positions Arg58 to Phe61 match the PP1-binding motif motif. One can recognise a CBM21 domain in the interval Arg121–Ala229.

Interacts with glycogen, PPP1CC catalytic subunit of PP1 and PYGL. Associates with glycogen particles. Forms complexes with debranching enzyme, glycogen phosphorylase, glycogen synthase and phosphorylase kinase which is necessary for its regulation of PP1 activity.

Functionally, acts as a glycogen-targeting subunit for phosphatase PP1. Facilitates interaction of the PP1 with enzymes of the glycogen metabolism and regulates its activity. Suppresses the rate at which PP1 dephosphorylates (inactivates) glycogen phosphorylase and enhances the rate at which it activates glycogen synthase and therefore limits glycogen breakdown. In Xenopus laevis (African clawed frog), this protein is Protein phosphatase 1 regulatory subunit 3B-A (ppp1r3b-a).